The following is a 1070-amino-acid chain: DNA-directed RNA polymerase subunit beta (1070 aa).

Belongs to the RNA polymerase beta chain family. In terms of assembly, in plastids the minimal PEP RNA polymerase catalytic core is composed of four subunits: alpha, beta, beta', and beta''. When a (nuclear-encoded) sigma factor is associated with the core the holoenzyme is formed, which can initiate transcription.

Its subcellular location is the plastid. It localises to the chloroplast. It catalyses the reaction RNA(n) + a ribonucleoside 5'-triphosphate = RNA(n+1) + diphosphate. Its function is as follows. DNA-dependent RNA polymerase catalyzes the transcription of DNA into RNA using the four ribonucleoside triphosphates as substrates. This Piper cenocladum (Ant piper) protein is DNA-directed RNA polymerase subunit beta.